A 274-amino-acid polypeptide reads, in one-letter code: Putative pyruvate, phosphate dikinase regulatory protein (274 aa).

Residue 151-158 (GVSRTSKT) coordinates ADP.

This sequence belongs to the pyruvate, phosphate/water dikinase regulatory protein family. PDRP subfamily.

The catalysed reaction is N(tele)-phospho-L-histidyl/L-threonyl-[pyruvate, phosphate dikinase] + ADP = N(tele)-phospho-L-histidyl/O-phospho-L-threonyl-[pyruvate, phosphate dikinase] + AMP + H(+). The enzyme catalyses N(tele)-phospho-L-histidyl/O-phospho-L-threonyl-[pyruvate, phosphate dikinase] + phosphate + H(+) = N(tele)-phospho-L-histidyl/L-threonyl-[pyruvate, phosphate dikinase] + diphosphate. Its function is as follows. Bifunctional serine/threonine kinase and phosphorylase involved in the regulation of the pyruvate, phosphate dikinase (PPDK) by catalyzing its phosphorylation/dephosphorylation. The polypeptide is Putative pyruvate, phosphate dikinase regulatory protein (Pelagibacter ubique (strain HTCC1062)).